Consider the following 42-residue polypeptide: Potassium channel toxin gamma-KTx 1.5 (42 aa).

4 disulfide bridges follow: Cys5/Cys23, Cys11/Cys34, Cys20/Cys39, and Cys24/Cys41.

It belongs to the ergtoxin family. Gamma-KTx 1 subfamily. Expressed by the venom gland.

It localises to the secreted. Functionally, blocks Kv11/ERG potassium channels. This chain is Potassium channel toxin gamma-KTx 1.5, found in Centruroides limpidus (Mexican scorpion).